A 749-amino-acid chain; its full sequence is Sentrin-specific protease 5 (749 aa).

Basic and acidic residues predominate over residues 268–279 (TGDHQENLRDNN). Disordered regions lie at residues 268 to 288 (TGDH…CNPV) and 394 to 440 (QESG…EEDG). The segment at 557 to 718 (FYNKHMLDMD…VFVLQYCKCL (162 aa)) is protease. Active-site residues include His640, Asp657, and Cys707.

The protein belongs to the peptidase C48 family. As to quaternary structure, interacts with CCAR2.

The protein resides in the nucleus. It localises to the nucleolus. In terms of biological role, protease that catalyzes two essential functions in the SUMO pathway: processing of full-length SUMO3 to its mature form and deconjugation of SUMO2 and SUMO3 from targeted proteins. Has weak proteolytic activity against full-length SUMO1 or SUMO1 conjugates. Required for cell division. This chain is Sentrin-specific protease 5 (Senp5), found in Mus musculus (Mouse).